Reading from the N-terminus, the 241-residue chain is PRA1 family protein H (241 aa).

A run of 3 helical transmembrane segments spans residues 142–162 (LFIV…VGLL), 189–205 (LSIG…LTFL), and 209–228 (MALF…HAGF).

Belongs to the PRA1 family.

It localises to the endoplasmic reticulum membrane. May be involved in both secretory and endocytic intracellular trafficking in the endosomal/prevacuolar compartments. In Arabidopsis thaliana (Mouse-ear cress), this protein is PRA1 family protein H (PRA1H).